The sequence spans 334 residues: Galactosylgalactosylxylosylprotein 3-beta-glucuronosyltransferase 1 (334 aa).

Over 1 to 6 the chain is Cytoplasmic; it reads MPKRRD. Residues 3 to 5 form an essential for transport from endoplasmic reticulum to Golgi apparatus and interaction with SAR1A region; that stretch reads KRR. The chain crosses the membrane as a helical; Signal-anchor for type II membrane protein span at residues 7 to 27; the sequence is ILAIVLIVLPWTLLITVWHQS. At 28 to 334 the chain is on the lumenal side; sequence SLAPLLAVHK…KGFTDPSVEI (307 aa). 91-93 lines the UDP-alpha-D-glucuronate pocket; that stretch reads PTY. Thr-103 and Thr-108 each carry phosphothreonine. Residue Asp-122 coordinates UDP-alpha-D-glucuronate. Asn-140 carries an N-linked (GlcNAc...) asparagine glycan. The UDP-alpha-D-glucuronate site is built by Arg-165 and Arg-170. The N-linked (GlcNAc...) asparagine glycan is linked to Asn-184. 195 to 197 provides a ligand contact to UDP-alpha-D-glucuronate; sequence DDD. Asp-197 is a Mn(2+) binding site. An interaction with galactose moiety of substrate glycoprotein region spans residues 245 to 254; it reads FDPHRPFAID. Catalysis depends on Glu-284, which acts as the Proton donor/acceptor. Asn-303 carries N-linked (GlcNAc...) asparagine glycosylation. 311 to 313 serves as a coordination point for UDP-alpha-D-glucuronate; the sequence is HTR.

The protein belongs to the glycosyltransferase 43 family. In terms of assembly, homodimer. Interacts with SAR1A. It depends on Mn(2+) as a cofactor. The soluble form derives from the membrane form by proteolytic processing.

It localises to the golgi apparatus membrane. Its subcellular location is the secreted. It is found in the endoplasmic reticulum membrane. The enzyme catalyses 3-O-(beta-D-galactosyl-(1-&gt;3)-beta-D-galactosyl-(1-&gt;4)-beta-D-xylosyl)-L-seryl-[protein] + UDP-alpha-D-glucuronate = 3-O-(beta-D-GlcA-(1-&gt;3)-beta-D-Gal-(1-&gt;3)-beta-D-Gal-(1-&gt;4)-beta-D-Xyl)-L-seryl-[protein] + UDP + H(+). The protein operates within protein modification; protein glycosylation. Functionally, involved in the biosynthesis of L2/HNK-1 carbohydrate epitope on glycoproteins. Can also play a role in glycosaminoglycan biosynthesis. Substrates include asialo-orosomucoid (ASOR), asialo-fetuin, and asialo-neural cell adhesion molecule. Requires sphingomyelin for activity: stearoyl-sphingomyelin was the most effective, followed by palmitoyl-sphingomyelin and lignoceroyl-sphingomyelin. Activity was demonstrated only for sphingomyelin with a saturated fatty acid and not for that with an unsaturated fatty acid, regardless of the length of the acyl group. This chain is Galactosylgalactosylxylosylprotein 3-beta-glucuronosyltransferase 1, found in Mus musculus (Mouse).